The following is a 559-amino-acid chain: Formate--tetrahydrofolate ligase (559 aa).

Residue 66–73 coordinates ATP; that stretch reads TPPGEGKT.

This sequence belongs to the formate--tetrahydrofolate ligase family.

It catalyses the reaction (6S)-5,6,7,8-tetrahydrofolate + formate + ATP = (6R)-10-formyltetrahydrofolate + ADP + phosphate. It participates in one-carbon metabolism; tetrahydrofolate interconversion. The chain is Formate--tetrahydrofolate ligase from Nocardioides sp. (strain ATCC BAA-499 / JS614).